The sequence spans 1117 residues: Cytospin-A (1117 aa).

Disordered stretches follow at residues 1–176, 293–323, and 358–390; these read MKKA…NQIS, SLSP…GSVE, and SSDD…NASE. The segment covering 45 to 90 has biased composition (low complexity); the sequence is TAASLSKTKSSDDLLAGMAGGVTVTNGVKGKKSTCPSAAPSASAPA. The span at 93-117 shows a compositional bias: polar residues; sequence TVENKSKISTGTASSTKRNTSTGNK. 2 stretches are compositionally biased toward basic and acidic residues: residues 120–131 and 158–171; these read SSTRERLRERTR and TATE…KSKS. A coiled-coil region spans residues 168-280; the sequence is KSKSDNQISD…LNALGFSLEQ (113 aa). The span at 293-303 shows a compositional bias: polar residues; it reads SLSPEITPGNQ. Low complexity predominate over residues 358–377; that stretch reads SSDDALDAPSSSESEGIPSI. Residues Ser-384, Ser-385, and Ser-389 each carry the phosphoserine modification. Coiled coils occupy residues 394-449 and 487-807; these read ACLT…MESL and RYME…RGRV. Residues Ser-868, Ser-881, and Ser-887 each carry the phosphoserine modification. Positions 919–1001 are disordered; the sequence is RTSSASRPAS…SRIREERKDP (83 aa). Positions 946–956 are enriched in basic and acidic residues; sequence RSSEEMKRDIS. The segment covering 971–990 has biased composition (low complexity); the sequence is TTSPQLSLSSSPTASVTPTT. Residues 1011–1116 form the Calponin-homology (CH) domain; it reads GSKRNALLKW…YVTAIYKYFE (106 aa).

The protein belongs to the cytospin-A family. As to quaternary structure, may interact with both microtubules and actin cytoskeleton.

It localises to the cytoplasm. The protein localises to the cytoskeleton. Its subcellular location is the spindle. It is found in the cell junction. The protein resides in the gap junction. In terms of biological role, involved in cytokinesis and spindle organization. May play a role in actin cytoskeleton organization and microtubule stabilization and hence required for proper cell adhesion and migration. The chain is Cytospin-A (SPECC1L) from Pan troglodytes (Chimpanzee).